Reading from the N-terminus, the 106-residue chain is MSIFYVLGKKGTIEILYKIKEGVNSFTSIKNALDMEGCGVSTRTLAERLNELEDENLIQKDGSKYYLTKKGQEALEIIENVMKWEAKWKEAKIPKIIIGMLGDKER.

The HTH hxlR-type domain maps to 1 to 93 (MSIFYVLGKK…WEAKWKEAKI (93 aa)).

This is an uncharacterized protein from Methanocaldococcus jannaschii (strain ATCC 43067 / DSM 2661 / JAL-1 / JCM 10045 / NBRC 100440) (Methanococcus jannaschii).